A 139-amino-acid polypeptide reads, in one-letter code: Nucleoside diphosphate kinase (139 aa).

Residues lysine 11, phenylalanine 59, arginine 87, threonine 93, arginine 104, and asparagine 114 each coordinate ATP. The active-site Pros-phosphohistidine intermediate is the histidine 117.

Belongs to the NDK family. Homotetramer. It depends on Mg(2+) as a cofactor.

The protein localises to the cytoplasm. It catalyses the reaction a 2'-deoxyribonucleoside 5'-diphosphate + ATP = a 2'-deoxyribonucleoside 5'-triphosphate + ADP. It carries out the reaction a ribonucleoside 5'-diphosphate + ATP = a ribonucleoside 5'-triphosphate + ADP. Its function is as follows. Major role in the synthesis of nucleoside triphosphates other than ATP. The ATP gamma phosphate is transferred to the NDP beta phosphate via a ping-pong mechanism, using a phosphorylated active-site intermediate. The polypeptide is Nucleoside diphosphate kinase (Moorella thermoacetica (strain ATCC 39073 / JCM 9320)).